The primary structure comprises 930 residues: RNA-binding protein 10 (930 aa).

Composition is skewed to basic and acidic residues over residues 1–14 (MEYERRGGRGDRTG) and 21–45 (RSQDDGGENRSRDHDYRDMDYRSYP). The interval 1-127 (MEYERRGGRG…EEDEEEEEKA (127 aa)) is disordered. E2 carries the post-translational modification N-acetylserine. 3 positions are modified to phosphoserine: R30, S61, and S89. The segment covering 59-70 (DSSEEQSAEDSY) has biased composition (acidic residues). The segment covering 80–89 (RRRRRRHRHS) has biased composition (basic residues). Basic and acidic residues predominate over residues 98–111 (RDGDYRDQDYRTEQ). Acidic residues predominate over residues 112–125 (GEEEEEEEDEEEEE). In terms of domain architecture, RRM 1 spans 129–209 (NIVMLRMLPQ…QKVSMHYSDP (81 aa)). A RanBP2-type zinc finger spans residues 212–242 (KINEDWLCNKCGVQNFKRREKCFKCGVPKSE). In terms of domain architecture, RRM 2 spans 300-384 (DTIILRNLNP…KTINVEFAKG (85 aa)). K383 bears the N6-acetyllysine mark. Disordered regions lie at residues 466–524 (PGIT…AANS), 537–569 (SELQSPTHPSSALPPATSPTAQESYSQYPVPDV), 620–685 (EQSA…DERR), and 700–753 (KGAL…EEKL). The segment covering 508-524 (YQQSAEASSSQGTAANS) has biased composition (polar residues). Positions 541–557 (SPTHPSSALPPATSPTA) are enriched in low complexity. 3 stretches are compositionally biased toward basic and acidic residues: residues 623-639 (ADGHKETGAPSKEGKEK), 653-669 (KDMERWARSLNKQKENF), and 700-709 (KGALAERQHT). A phosphoserine mark is found at S718, S723, S733, S736, and S738. Residues 743 to 753 (ERGGPEREEKL) show a composition bias toward basic and acidic residues. The segment at 759–784 (LACLLCRRQFPSKEALIRHQQLSGLH) adopts a C2H2-type; atypical zinc-finger fold. Phosphoserine occurs at positions 781 and 797. Residues 815–826 (RDRAAERREKYG) are compositionally biased toward basic and acidic residues. Residues 815-861 (RDRAAERREKYGIPEPPEPKRRKYGGISTASVDFEQPTRDGLGSDNI) are disordered. S845 carries the post-translational modification Phosphoserine. Residues 858 to 904 (SDNIGSRMLQAMGWKEGSGLGRKKQGIVTPIEAQTRVRGSGLGARGS) form the G-patch domain. R902 is subject to Omega-N-methylarginine.

Associates with the spliceosome. Component of a large chromatin remodeling complex, at least composed of MYSM1, PCAF, RBM10 and KIF11/TRIP5.

The protein resides in the nucleus. Its function is as follows. Binds to ssRNA containing the consensus sequence 5'-AGGUAA-3'. May be involved in post-transcriptional processing, most probably in mRNA splicing. Binds to RNA homopolymers, with a preference for poly(G) and poly(U) and little for poly(A). May bind to specific miRNA hairpins. The chain is RNA-binding protein 10 from Homo sapiens (Human).